The sequence spans 223 residues: Deoxyribose-phosphate aldolase (223 aa).

Catalysis depends on D91, which acts as the Proton donor/acceptor. Residue K154 is the Schiff-base intermediate with acetaldehyde of the active site. K183 acts as the Proton donor/acceptor in catalysis.

The protein belongs to the DeoC/FbaB aldolase family. DeoC type 1 subfamily.

The protein localises to the cytoplasm. It carries out the reaction 2-deoxy-D-ribose 5-phosphate = D-glyceraldehyde 3-phosphate + acetaldehyde. Its pathway is carbohydrate degradation; 2-deoxy-D-ribose 1-phosphate degradation; D-glyceraldehyde 3-phosphate and acetaldehyde from 2-deoxy-alpha-D-ribose 1-phosphate: step 2/2. Catalyzes a reversible aldol reaction between acetaldehyde and D-glyceraldehyde 3-phosphate to generate 2-deoxy-D-ribose 5-phosphate. This chain is Deoxyribose-phosphate aldolase, found in Geobacillus kaustophilus (strain HTA426).